A 208-amino-acid polypeptide reads, in one-letter code: MAFDEEWIPKTRLGKLVMEGQVASMEEAIKSGLPIREPQIIDMLLPDLEDEVLDINMVQRMTDSGRRVKFRATVIVGNRNGYVGLGQAKDVQVGPAIRKAIDAAKLDITYIHRGCGSWECACGLPHTVPYEVTGKAGSVSVTLIPAPRGLGIAAGNTATKVLEKAGIKDVWTKTFGTTRSTLNFAKATFDALNQVNVMRLPVYCKEEA.

The 64-residue stretch at 48 to 111 folds into the S5 DRBM domain; it reads LEDEVLDINM…DAAKLDITYI (64 aa).

It belongs to the universal ribosomal protein uS5 family. As to quaternary structure, part of the 30S ribosomal subunit. Contacts protein S4.

With S4 and S12 plays an important role in translational accuracy. The protein is Small ribosomal subunit protein uS5 of Methanosarcina barkeri (strain Fusaro / DSM 804).